Reading from the N-terminus, the 354-residue chain is Probable RNA methyltransferase AZOSEA28700 (354 aa).

Glu-88 functions as the Proton acceptor in the catalytic mechanism. A Radical SAM core domain is found at 91–317; the sequence is LLPRDGLCVS…TKLRHSAGQD (227 aa). Cys-98 and Cys-322 are disulfide-bonded. 3 residues coordinate [4Fe-4S] cluster: Cys-105, Cys-109, and Cys-112. Residues 150–151, Ser-180, 203–205, and Asn-279 each bind S-adenosyl-L-methionine; these read GE and SLH. Catalysis depends on Cys-322, which acts as the S-methylcysteine intermediate.

Belongs to the radical SAM superfamily. RlmN family. Requires [4Fe-4S] cluster as cofactor.

The protein localises to the cytoplasm. The protein is Probable RNA methyltransferase AZOSEA28700 of Aromatoleum aromaticum (strain DSM 19018 / LMG 30748 / EbN1) (Azoarcus sp. (strain EbN1)).